Consider the following 534-residue polypeptide: SWI/SNF complex component SNF12 homolog (534 aa).

A compositionally biased stretch (polar residues) spans 1–12 (MSGNNNNPQKPQ). 2 disordered regions span residues 1–33 (MSGN…PGNQ) and 78–132 (MTMN…SPMR). A compositionally biased stretch (low complexity) spans 94-105 (PSSPSLTTPGSL). Positions 314 to 391 (YVPEKFKLST…SQKISHHLSP (78 aa)) constitute an SWIB/MDM2 domain.

The protein belongs to the SMARCD family. In terms of assembly, part of a SWI-SNF complex.

The protein resides in the nucleus. Functionally, involved in transcriptional activation and repression of select genes by chromatin remodeling (alteration of DNA-nucleosome topology). The sequence is that of SWI/SNF complex component SNF12 homolog from Arabidopsis thaliana (Mouse-ear cress).